The sequence spans 378 residues: MKHSVHFGAGNIGRGFIGEILFKNGFHIDFVDVNNQIIHALNEKGKYEIEIAQKGQSRIEVTNVAGINSKEHPEQVIEAIQRTDIITTAIGPNILPFIAELLAKGIEARRVAGNTQALDVMACKNMIGGSQFLYQEVKKYLSPEGLTFADNYIGFPNAAVDRIVPAQSHEDSLFVVVEPFNEWVVETKRLKNPDLRLKDVHYEEDLEPFIERKLFSVNSGHATSAYIGAHYGAKTILEALQNPNIKSRIESVLAEIRSLLIAKWNFDKKELENYHKVIIERFENPFIVDEVSRVARTPIRKLGYNERFIRPIRELKELSLSYKNLLKTVGYAFDYRDVNDEESIRLGELLAKQSVKDVVIQVTGLDDQELIDQIVEYI.

4-15 provides a ligand contact to NAD(+); it reads SVHFGAGNIGRG.

This sequence belongs to the mannitol dehydrogenase family.

It catalyses the reaction D-mannitol 1-phosphate + NAD(+) = beta-D-fructose 6-phosphate + NADH + H(+). This Streptococcus pneumoniae (strain 70585) protein is Mannitol-1-phosphate 5-dehydrogenase.